The primary structure comprises 448 residues: uncharacterized protein (448 aa).

Over residues 187–198 the composition is skewed to basic and acidic residues; that stretch reads SKGDRGDADDRG. 3 disordered regions span residues 187–221, 243–270, and 291–361; these read SKGDRGDADDRGPASVGSGGAPARGAGQQPELPTR, LQVPGGTSAAIPSASSTPSLPNLGGATM, and LSGL…LPNG. Residues 243-261 are compositionally biased toward low complexity; it reads LQVPGGTSAAIPSASSTPS. Basic and acidic residues predominate over residues 307–334; sequence FDERGQEVRDPADYEHSNEPDERRADDR.

The protein to M.tuberculosis Rv0025 and Rv0739.

This is an uncharacterized protein from Mycobacterium tuberculosis (strain ATCC 25618 / H37Rv).